The primary structure comprises 490 residues: Cytochrome P450 2C29 (490 aa).

A signal peptide spans 1–25 (MDLVVFLALTLSCLILLSLWRQSSG). N6-acetyllysine is present on residues lysine 249, lysine 252, and lysine 375. Cysteine 435 contributes to the heme binding site.

It belongs to the cytochrome P450 family. Heme is required as a cofactor. In terms of tissue distribution, expressed in liver as well as in extrahepatic tissues including brain, kidney, lung, heart, and intestine.

The protein localises to the endoplasmic reticulum membrane. It localises to the microsome membrane. It catalyses the reaction an organic molecule + reduced [NADPH--hemoprotein reductase] + O2 = an alcohol + oxidized [NADPH--hemoprotein reductase] + H2O + H(+). The catalysed reaction is (5Z,8Z,11Z,14Z)-eicosatetraenoate + reduced [NADPH--hemoprotein reductase] + O2 = 14,15-epoxy-(5Z,8Z,11Z)-eicosatrienoate + oxidized [NADPH--hemoprotein reductase] + H2O + H(+). It functions in the pathway lipid metabolism; arachidonate metabolism. In terms of biological role, a cytochrome P450 monooxygenase that selectively catalyzes the epoxidation of 14,15 double bond of (5Z,8Z,11Z,14Z)-eicosatetraenoic acid (arachidonate) forming 14,15-epoxyeicosatrienoic acid (14,15-EET) regioisomer. Mechanistically, uses molecular oxygen inserting one oxygen atom into a substrate, and reducing the second into a water molecule, with two electrons provided by NADPH via cytochrome P450 reductase (CPR; NADPH--hemoprotein reductase). The chain is Cytochrome P450 2C29 from Mus musculus (Mouse).